We begin with the raw amino-acid sequence, 309 residues long: Dihydroorotate dehydrogenase B (NAD(+)), catalytic subunit (309 aa).

Residues Ser-21 and 45–46 contribute to the FMN site; that span reads KA. Substrate-binding positions include Lys-45 and 69-73; that span reads NAIGL. Residues Asn-99 and Asn-127 each coordinate FMN. A substrate-binding site is contributed by Asn-127. Cys-130 serves as the catalytic Nucleophile. Positions 165 and 191 each coordinate FMN. 192–193 is a substrate binding site; that stretch reads NT. FMN-binding positions include Gly-217, 243–244, and 265–266; these read GG and GT.

This sequence belongs to the dihydroorotate dehydrogenase family. Type 1 subfamily. In terms of assembly, heterotetramer of 2 PyrK and 2 PyrD type B subunits. FMN serves as cofactor.

The protein localises to the cytoplasm. The catalysed reaction is (S)-dihydroorotate + NAD(+) = orotate + NADH + H(+). It participates in pyrimidine metabolism; UMP biosynthesis via de novo pathway; orotate from (S)-dihydroorotate (NAD(+) route): step 1/1. In terms of biological role, catalyzes the conversion of dihydroorotate to orotate with NAD(+) as electron acceptor. This is Dihydroorotate dehydrogenase B (NAD(+)), catalytic subunit (pyrD) from Bacillus cereus (strain AH187).